The primary structure comprises 389 residues: Tryptophan 2,3-dioxygenase (389 aa).

Residues 60–64 and R131 contribute to the substrate site; that span reads FIITH. H316 serves as a coordination point for heme. T331 is a substrate binding site.

This sequence belongs to the tryptophan 2,3-dioxygenase family. Homotetramer. Dimer of dimers. The cofactor is heme.

The enzyme catalyses L-tryptophan + O2 = N-formyl-L-kynurenine. It functions in the pathway amino-acid degradation; L-tryptophan degradation via kynurenine pathway; L-kynurenine from L-tryptophan: step 1/2. Its pathway is pigment biosynthesis; ommochrome biosynthesis. Heme-dependent dioxygenase that catalyzes the oxidative cleavage of the L-tryptophan (L-Trp) pyrrole ring and converts L-tryptophan to N-formyl-L-kynurenine. Catalyzes the oxidative cleavage of the indole moiety. The protein is Tryptophan 2,3-dioxygenase of Mayetiola destructor (Hessian fly).